The sequence spans 183 residues: Endoribonuclease YbeY (183 aa).

Zn(2+) is bound by residues His-143, His-147, and His-153.

It belongs to the endoribonuclease YbeY family. It depends on Zn(2+) as a cofactor.

The protein localises to the cytoplasm. In terms of biological role, single strand-specific metallo-endoribonuclease involved in late-stage 70S ribosome quality control and in maturation of the 3' terminus of the 16S rRNA. The protein is Endoribonuclease YbeY of Rickettsia bellii (strain OSU 85-389).